Consider the following 154-residue polypeptide: D-aminoacyl-tRNA deacylase (154 aa).

The short motif at 142 to 143 is the Gly-cisPro motif, important for rejection of L-amino acids element; it reads GP.

It belongs to the DTD family. Homodimer.

The protein resides in the cytoplasm. The enzyme catalyses glycyl-tRNA(Ala) + H2O = tRNA(Ala) + glycine + H(+). The catalysed reaction is a D-aminoacyl-tRNA + H2O = a tRNA + a D-alpha-amino acid + H(+). Functionally, an aminoacyl-tRNA editing enzyme that deacylates mischarged D-aminoacyl-tRNAs. Also deacylates mischarged glycyl-tRNA(Ala), protecting cells against glycine mischarging by AlaRS. Acts via tRNA-based rather than protein-based catalysis; rejects L-amino acids rather than detecting D-amino acids in the active site. By recycling D-aminoacyl-tRNA to D-amino acids and free tRNA molecules, this enzyme counteracts the toxicity associated with the formation of D-aminoacyl-tRNA entities in vivo and helps enforce protein L-homochirality. The chain is D-aminoacyl-tRNA deacylase from Acidovorax sp. (strain JS42).